The primary structure comprises 48 residues: Disintegrin accutin (48 aa).

Position 1 is a pyrrolidone carboxylic acid (Q1). One can recognise a Disintegrin domain in the interval 1-48 (QGAQCTAGPCCWPCKFLKEGTICRRARGDDLDDYCNGISADCPRNPYY). 3 disulfides stabilise this stretch: C5–C11, C10–C35, and C23–C42. The short motif at 27–29 (RGD) is the Cell attachment site element.

This sequence belongs to the venom metalloproteinase (M12B) family. P-II subfamily. P-IIa sub-subfamily. In terms of assembly, monomer (disintegrin). In terms of tissue distribution, expressed by the venom gland.

Its subcellular location is the secreted. In terms of biological role, inhibit human platelet aggregation induced by ADP, collagen, thrombin or the thromboxane analog U46619 in platelet suspension with IC(50) values of 66-267 nM. Acts by inhibiting fibrinogen interaction with platelet receptors GPIIb/GPIIIa (ITGA2B/ITGB3). It also inhibits angiogenesis in vivo and in vitro by blocking integrin alpha-V/beta-3 (ITGAV/ITGB3) of endothelial cells and by inducing apoptosis. This chain is Disintegrin accutin, found in Deinagkistrodon acutus (Hundred-pace snake).